A 217-amino-acid polypeptide reads, in one-letter code: tRNA (guanine-N(7)-)-methyltransferase (217 aa).

Residues Glu43, Asp68, Asn101, and Asn123 each coordinate S-adenosyl-L-methionine. Substrate is bound at residue Lys127. The segment at Arg129–Arg134 is interaction with RNA. Substrate-binding positions include Asp159 and Thr196–Glu199.

It belongs to the class I-like SAM-binding methyltransferase superfamily. TrmB family.

It catalyses the reaction guanosine(46) in tRNA + S-adenosyl-L-methionine = N(7)-methylguanosine(46) in tRNA + S-adenosyl-L-homocysteine. It functions in the pathway tRNA modification; N(7)-methylguanine-tRNA biosynthesis. Its function is as follows. Catalyzes the formation of N(7)-methylguanine at position 46 (m7G46) in tRNA. The sequence is that of tRNA (guanine-N(7)-)-methyltransferase from Clostridium botulinum (strain Loch Maree / Type A3).